The sequence spans 366 residues: Chorismate synthase (366 aa).

The NADP(+) site is built by R48 and R54. FMN contacts are provided by residues 131–133, 243–244, G288, 303–307, and R329; these read RAS, NA, and KPTPS.

It belongs to the chorismate synthase family. As to quaternary structure, homotetramer. FMNH2 is required as a cofactor.

The enzyme catalyses 5-O-(1-carboxyvinyl)-3-phosphoshikimate = chorismate + phosphate. The protein operates within metabolic intermediate biosynthesis; chorismate biosynthesis; chorismate from D-erythrose 4-phosphate and phosphoenolpyruvate: step 7/7. Catalyzes the anti-1,4-elimination of the C-3 phosphate and the C-6 proR hydrogen from 5-enolpyruvylshikimate-3-phosphate (EPSP) to yield chorismate, which is the branch point compound that serves as the starting substrate for the three terminal pathways of aromatic amino acid biosynthesis. This reaction introduces a second double bond into the aromatic ring system. The sequence is that of Chorismate synthase from Bartonella quintana (strain Toulouse) (Rochalimaea quintana).